Consider the following 398-residue polypeptide: NADH-quinone oxidoreductase subunit D (398 aa).

Belongs to the complex I 49 kDa subunit family. As to quaternary structure, NDH-1 is composed of 14 different subunits. Subunits NuoB, C, D, E, F, and G constitute the peripheral sector of the complex.

Its subcellular location is the cell inner membrane. The enzyme catalyses a quinone + NADH + 5 H(+)(in) = a quinol + NAD(+) + 4 H(+)(out). Functionally, NDH-1 shuttles electrons from NADH, via FMN and iron-sulfur (Fe-S) centers, to quinones in the respiratory chain. The immediate electron acceptor for the enzyme in this species is believed to be ubiquinone. Couples the redox reaction to proton translocation (for every two electrons transferred, four hydrogen ions are translocated across the cytoplasmic membrane), and thus conserves the redox energy in a proton gradient. The protein is NADH-quinone oxidoreductase subunit D of Bradyrhizobium sp. (strain BTAi1 / ATCC BAA-1182).